We begin with the raw amino-acid sequence, 684 residues long: uncharacterized protein (684 aa).

Disordered regions lie at residues 267-353 and 388-449; these read MGAR…TCTD and SVAS…AERE. Residues 316–326 show a composition bias toward polar residues; it reads GMTSAKASTSY. Over residues 438–449 the composition is skewed to basic and acidic residues; it reads RPTEARRRAERE.

This is an uncharacterized protein from Colorado tick fever virus (strain USA/Florio N-7180) (CTFV).